The primary structure comprises 441 residues: Amino-acid acetyltransferase (441 aa).

Positions Glu-295–Ser-434 constitute an N-acetyltransferase domain.

The protein belongs to the acetyltransferase family. ArgA subfamily. As to quaternary structure, homohexamer.

Its subcellular location is the cytoplasm. It carries out the reaction L-glutamate + acetyl-CoA = N-acetyl-L-glutamate + CoA + H(+). It functions in the pathway amino-acid biosynthesis; L-arginine biosynthesis; N(2)-acetyl-L-ornithine from L-glutamate: step 1/4. The chain is Amino-acid acetyltransferase from Pectobacterium atrosepticum (strain SCRI 1043 / ATCC BAA-672) (Erwinia carotovora subsp. atroseptica).